Here is a 258-residue protein sequence, read N- to C-terminus: Putative gamma-secretase subunit APH-1C (258 aa).

7 helical membrane passes run 5-25 (VFFG…LFTI), 32-52 (VIFL…SSMF), 71-91 (LLIF…LAYY), 116-136 (LLAY…SFVN), 161-181 (AFMT…FFDG), 187-207 (WYTL…TFLS), and 214-234 (LVTA…VAGG).

This sequence belongs to the APH-1 family. Potential component of the gamma-secretase complex.

It localises to the membrane. Functionally, potential subunit of the gamma-secretase complex, an endoprotease complex that catalyzes the intramembrane cleavage of integral proteins such as Notch receptors and APP (amyloid-beta precursor protein). This chain is Putative gamma-secretase subunit APH-1C (Aph1c), found in Mus musculus (Mouse).